Here is a 101-residue protein sequence, read N- to C-terminus: MAKQSMKAREVKRVALADKYFAKRAELKAIISDVNASDEDRWNAVLKLQTLPRDSSPSRQRNRCRQTGRPHGYVGKFGLSRIKLREAAMRGEVPGLKKASW.

Belongs to the universal ribosomal protein uS14 family. In terms of assembly, part of the 30S ribosomal subunit. Contacts proteins S3 and S10.

In terms of biological role, binds 16S rRNA, required for the assembly of 30S particles and may also be responsible for determining the conformation of the 16S rRNA at the A site. The polypeptide is Small ribosomal subunit protein uS14 (Citrobacter koseri (strain ATCC BAA-895 / CDC 4225-83 / SGSC4696)).